A 470-amino-acid chain; its full sequence is Pheromone a factor receptor (470 aa).

Residues 1–5 (MSYKS) are Extracellular-facing. Residues 6-23 (AIIGLCLLAVILLAPPLA) form a helical membrane-spanning segment. The Cytoplasmic portion of the chain corresponds to 24–29 (WHSHTK). Residues 30–53 (NIPAIILITWLLTMNLTCIVDAAI) traverse the membrane as a helical segment. The Extracellular segment spans residues 54–70 (WSDDDFLTRWDGKGWCD). A helical transmembrane segment spans residues 71–98 (IVIKLQVGANIGISCAVTNIIYNLHTIL). Residues 99 to 116 (KADSVLPDLSSWTKIVKD) lie on the Cytoplasmic side of the membrane. A helical membrane pass occupies residues 117 to 134 (LVISLFTPVMVMGFSYLL). Residues 135–155 (QVFRYGIARYNGCQNLLSPTW) are Extracellular-facing. Residues 156 to 183 (ITTVLYTMWMLIWSFVGAVYATLVLFVF) form a helical membrane-spanning segment. Over 184 to 205 (YKKRKDVRDILHCTNSGLNLTR) the chain is Cytoplasmic. A helical membrane pass occupies residues 206-228 (FARLLIFCFIIILVMFPFSVYTF). The Extracellular segment spans residues 229–266 (VQDLQQVEGHYTFKNTHSSTIWNTIIKFDPGRPIYNIW). A helical transmembrane segment spans residues 267-285 (LYVLMSYLVFLIFGLGSDA). The Cytoplasmic segment spans residues 286-470 (LHMYSKFLRS…EHSSENTAGP (185 aa)). The hydrophilic stretch occupies residues 300–470 (FVLDMWKRFI…EHSSENTAGP (171 aa)). Positions 440–470 (NFEGESLCYSPASKEENSSSNEHSSENTAGP) are disordered.

The protein belongs to the G-protein coupled receptor 4 family.

It localises to the membrane. In terms of biological role, receptor for the peptide pheromone a factor. The protein is Pheromone a factor receptor (STE3) of Saccharomyces cerevisiae (strain ATCC 204508 / S288c) (Baker's yeast).